The chain runs to 220 residues: ATP phosphoribosyltransferase (220 aa).

This sequence belongs to the ATP phosphoribosyltransferase family. Short subfamily. As to quaternary structure, heteromultimer composed of HisG and HisZ subunits.

The protein localises to the cytoplasm. It carries out the reaction 1-(5-phospho-beta-D-ribosyl)-ATP + diphosphate = 5-phospho-alpha-D-ribose 1-diphosphate + ATP. It functions in the pathway amino-acid biosynthesis; L-histidine biosynthesis; L-histidine from 5-phospho-alpha-D-ribose 1-diphosphate: step 1/9. Catalyzes the condensation of ATP and 5-phosphoribose 1-diphosphate to form N'-(5'-phosphoribosyl)-ATP (PR-ATP). Has a crucial role in the pathway because the rate of histidine biosynthesis seems to be controlled primarily by regulation of HisG enzymatic activity. This Anaeromyxobacter sp. (strain Fw109-5) protein is ATP phosphoribosyltransferase.